Consider the following 231-residue polypeptide: 7-cyano-7-deazaguanine synthase (231 aa).

7 to 17 (LSSGLDSVAAL) contributes to the ATP binding site. Cys195, Cys203, Cys206, and Cys209 together coordinate Zn(2+).

Belongs to the QueC family. Zn(2+) is required as a cofactor.

The catalysed reaction is 7-carboxy-7-deazaguanine + NH4(+) + ATP = 7-cyano-7-deazaguanine + ADP + phosphate + H2O + H(+). Its pathway is purine metabolism; 7-cyano-7-deazaguanine biosynthesis. Its function is as follows. Catalyzes the ATP-dependent conversion of 7-carboxy-7-deazaguanine (CDG) to 7-cyano-7-deazaguanine (preQ(0)). The sequence is that of 7-cyano-7-deazaguanine synthase from Methanosarcina mazei (strain ATCC BAA-159 / DSM 3647 / Goe1 / Go1 / JCM 11833 / OCM 88) (Methanosarcina frisia).